Here is a 125-residue protein sequence, read N- to C-terminus: uncharacterized protein (125 aa).

This is an uncharacterized protein from Bacillus subtilis (strain 168).